The sequence spans 380 residues: MYG1 exonuclease (380 aa).

Residues 1–46 (MGRRFLRGILTLPLRSVLQAQHRMLGSEQDPPAKRPRNNLMAPPRI) constitute a mitochondrion transit peptide. 2 positions are modified to N6-acetyllysine: lysine 266 and lysine 272.

Belongs to the MYG1 family. Ubiquitously expressed, with highest levels in testis.

The protein localises to the nucleus. The protein resides in the nucleoplasm. Its subcellular location is the mitochondrion matrix. It localises to the nucleolus. Its function is as follows. 3'-5' RNA exonuclease which cleaves in situ on specific transcripts in both nucleus and mitochondrion. Involved in regulating spatially segregated organellar RNA processing, acts as a coordinator of nucleo-mitochondrial crosstalk. In nucleolus, processes pre-ribosomal RNA involved in ribosome assembly and alters cytoplasmic translation. In mitochondrial matrix, processes 3'-termini of the mito-ribosomal and messenger RNAs and controls translation of mitochondrial proteins. The sequence is that of MYG1 exonuclease from Mus musculus (Mouse).